We begin with the raw amino-acid sequence, 235 residues long: 2-C-methyl-D-erythritol 4-phosphate cytidylyltransferase (235 aa).

The protein belongs to the IspD/TarI cytidylyltransferase family. IspD subfamily.

It carries out the reaction 2-C-methyl-D-erythritol 4-phosphate + CTP + H(+) = 4-CDP-2-C-methyl-D-erythritol + diphosphate. It functions in the pathway isoprenoid biosynthesis; isopentenyl diphosphate biosynthesis via DXP pathway; isopentenyl diphosphate from 1-deoxy-D-xylulose 5-phosphate: step 2/6. Its function is as follows. Catalyzes the formation of 4-diphosphocytidyl-2-C-methyl-D-erythritol from CTP and 2-C-methyl-D-erythritol 4-phosphate (MEP). In Synechococcus sp. (strain JA-3-3Ab) (Cyanobacteria bacterium Yellowstone A-Prime), this protein is 2-C-methyl-D-erythritol 4-phosphate cytidylyltransferase.